Reading from the N-terminus, the 446-residue chain is Glutamyl-tRNA(Gln) amidotransferase subunit D (446 aa).

The Asparaginase/glutaminase domain occupies 90 to 421 (SEVMIISTGG…DRIKEIMLTN (332 aa)). Residues Thr-100, Thr-176, Asp-177, and Lys-255 contribute to the active site.

The protein belongs to the asparaginase 1 family. GatD subfamily. Heterodimer of GatD and GatE.

It catalyses the reaction L-glutamyl-tRNA(Gln) + L-glutamine + ATP + H2O = L-glutaminyl-tRNA(Gln) + L-glutamate + ADP + phosphate + H(+). Its function is as follows. Allows the formation of correctly charged Gln-tRNA(Gln) through the transamidation of misacylated Glu-tRNA(Gln) in organisms which lack glutaminyl-tRNA synthetase. The reaction takes place in the presence of glutamine and ATP through an activated gamma-phospho-Glu-tRNA(Gln). The GatDE system is specific for glutamate and does not act on aspartate. The chain is Glutamyl-tRNA(Gln) amidotransferase subunit D from Sulfolobus acidocaldarius (strain ATCC 33909 / DSM 639 / JCM 8929 / NBRC 15157 / NCIMB 11770).